Here is a 197-residue protein sequence, read N- to C-terminus: MQKVVLATGNAGKVRELASLLSDFGLDIVAQTDLGVDSAEETGLTFIENAILKARHAAKVTGLPAIADDSGLAVDALGGAPGIYSARYSGEDATDQKNLQKLLETLKDVPDDQRQARFHCVLVYLRHAEDPTPLVCHGSWPGVITREPAGTGGFGYDPIFFVPSEGKTAAELTREEKSAISHRGQALKLLLDALRNG.

8-13 is a substrate binding site; it reads TGNAGK. Mg(2+)-binding residues include Glu-40 and Asp-69. Asp-69 functions as the Proton acceptor in the catalytic mechanism. Residues Ser-70, 154-157, Lys-177, and 182-183 contribute to the substrate site; these read FGYD and HR.

It belongs to the HAM1 NTPase family. Homodimer. The cofactor is Mg(2+).

The enzyme catalyses XTP + H2O = XMP + diphosphate + H(+). The catalysed reaction is dITP + H2O = dIMP + diphosphate + H(+). It carries out the reaction ITP + H2O = IMP + diphosphate + H(+). Functionally, pyrophosphatase that catalyzes the hydrolysis of nucleoside triphosphates to their monophosphate derivatives, with a high preference for the non-canonical purine nucleotides XTP (xanthosine triphosphate), dITP (deoxyinosine triphosphate) and ITP. Seems to function as a house-cleaning enzyme that removes non-canonical purine nucleotides from the nucleotide pool, thus preventing their incorporation into DNA/RNA and avoiding chromosomal lesions. The chain is dITP/XTP pyrophosphatase (rdgB) from Shigella flexneri.